We begin with the raw amino-acid sequence, 276 residues long: Undecaprenyl-diphosphatase (276 aa).

The next 8 membrane-spanning stretches (helical) occupy residues L2–I22, F43–Y63, W83–L103, L111–I131, T147–G167, Y186–L206, L224–L244, and A255–A275.

It belongs to the UppP family.

Its subcellular location is the cell membrane. It carries out the reaction di-trans,octa-cis-undecaprenyl diphosphate + H2O = di-trans,octa-cis-undecaprenyl phosphate + phosphate + H(+). Catalyzes the dephosphorylation of undecaprenyl diphosphate (UPP). Confers resistance to bacitracin. This is Undecaprenyl-diphosphatase from Limosilactobacillus fermentum (strain NBRC 3956 / LMG 18251) (Lactobacillus fermentum).